The chain runs to 359 residues: MQTLADLLNTIPAIDPAAMSRAQRHIDGLLKPVGSLGRLEALAIQLAGMPGLNGIPHVGKKAVLVMCADHGVWEEGVAISPKEVTAIQAENMTRGTTGVCVLAAQAGANVHVIDVGIDTAEPIPGLINMRVARGSGNIASAPAMSRRQAEKLLLDVICYTRELAKNGVTLFGVGELGMANTTPAAAIVSTITGRDPEEVVGIGANLPTDKLVNKIDVVRRAIMLNQPNPQDGVDVLAKVGGFDLVGMAGVMLGAASCGLPVLLDGFLSYAAALAACQMSPAIKPYLIPSHLSAEKGARIALSHLGLEPYLNMEMRLGEGSGAALAMPIIEAACAIYNNMGELAASNIVLPGNTTSDLNS.

Glu-318 serves as the catalytic Proton acceptor.

It belongs to the CobT family. As to quaternary structure, homodimer.

The enzyme catalyses 5,6-dimethylbenzimidazole + nicotinate beta-D-ribonucleotide = alpha-ribazole 5'-phosphate + nicotinate + H(+). It functions in the pathway nucleoside biosynthesis; alpha-ribazole biosynthesis; alpha-ribazole from 5,6-dimethylbenzimidazole: step 1/2. Its function is as follows. Catalyzes the synthesis of alpha-ribazole-5'-phosphate from nicotinate mononucleotide (NAMN) and 5,6-dimethylbenzimidazole (DMB). This chain is Nicotinate-nucleotide--dimethylbenzimidazole phosphoribosyltransferase, found in Escherichia coli O17:K52:H18 (strain UMN026 / ExPEC).